We begin with the raw amino-acid sequence, 442 residues long: Glycoprotein endo-alpha-1,2-mannosidase-like protein (442 aa).

Residues Met1 to Ala8 are Cytoplasmic-facing. The helical; Signal-anchor for type II membrane protein transmembrane segment at Cys9 to Leu29 threads the bilayer. The Lumenal portion of the chain corresponds to Lys30–Met442.

Belongs to the glycosyl hydrolase 99 family.

It localises to the golgi apparatus membrane. This Danio rerio (Zebrafish) protein is Glycoprotein endo-alpha-1,2-mannosidase-like protein (maneal).